The sequence spans 98 residues: Large ribosomal subunit protein uL23 (98 aa).

Belongs to the universal ribosomal protein uL23 family. In terms of assembly, part of the 50S ribosomal subunit. Contacts protein L29, and trigger factor when it is bound to the ribosome.

Its function is as follows. One of the early assembly proteins it binds 23S rRNA. One of the proteins that surrounds the polypeptide exit tunnel on the outside of the ribosome. Forms the main docking site for trigger factor binding to the ribosome. The polypeptide is Large ribosomal subunit protein uL23 (Rickettsia bellii (strain OSU 85-389)).